Consider the following 206-residue polypeptide: Superoxide dismutase [Mn] (206 aa).

Mn(2+) is bound by residues His-27, His-82, Asp-168, and His-172.

The protein belongs to the iron/manganese superoxide dismutase family. Homodimer. Requires Mn(2+) as cofactor.

The enzyme catalyses 2 superoxide + 2 H(+) = H2O2 + O2. Destroys superoxide anion radicals which are normally produced within the cells and which are toxic to biological systems. The polypeptide is Superoxide dismutase [Mn] (sodA) (Salmonella typhimurium (strain LT2 / SGSC1412 / ATCC 700720)).